Here is a 704-residue protein sequence, read N- to C-terminus: Translational regulator orb2 (704 aa).

Residues 1–64 (MDSLKLPKAN…PPGLGSSTPI (64 aa)) form a disordered region. A gln/His-rich region spans residues 1-87 (MDSLKLPKAN…ILQSFHHSKH (87 aa)). Positions 9 to 42 (ANSATSSASGSNSNLSGSTSASASAATSPTSSGT) are enriched in low complexity. Phosphoserine is present on residues S74, S88, and S100. Disordered regions lie at residues 82-106 (FHHSKHSPSGGASGGGDASPTSNLL), 166-266 (LPNL…GVSP), and 417-438 (SPSRLSPHSPHSPIQGGNGGNV). The gln/His-rich stretch occupies residues 163-240 (CGGLPNLNLN…PSSPGGGGGG (78 aa)). Composition is skewed to low complexity over residues 176 to 205 (QLHQQQHQQQHQQHQQHQQQQQLHQHQQQL), 218 to 233 (QQQQLRESGGSHSPSS), and 417 to 429 (SPSRLSPHSPHSP). 2 positions are modified to phosphoserine: S425 and S428. RRM domains follow at residues 447–538 (RKVF…PWRL) and 555–637 (KTVF…PYVL).

As to quaternary structure, monomer. Upon neuronal stimulation, forms stable amyloid-like oligomers composed of isoform A and isoform B which are required for formation of persistent long-term memory. Isoform A is critical for oligomer formation. Phe-5 of isoform A is required for amyloid-like oligomerization. Rapidly forms amyloids and toxic intermediates are extremely transient. Unlike in the adult nervous system, remains monomeric in the early embryo. Interacts with the translational regulator bol. Interacts with Tob; the interaction is enhanced by neuronal stimulation, stabilizes isoform A and induces oligomerization. In terms of processing, phosphorylation regulates interaction with Tob and oligomerization. Protein phosphatase 2A keeps both Orb2 and Tob in an unphosphorylated form. Following synaptic activation, unphosphorylated Orb2 is bound and stabilized by unphosphorylated Tob. Tob recruits activated LimK which phosphorylates both Orb2 and Tob and enhances Orb2 oligomerization. In terms of tissue distribution, broadly expressed throughout the nervous system of embryo, larva and adult including the ventral nerve cord and brain (at protein level). In early embryos, deposited maternally and distributed uniformly throughout the embryo until the extended germband stage. By mid-embryogenesis, highest levels are found in the central and peripheral nervous systems with lower expression also detected in the ectoderm and mesoderm. In adults, high levels are present in the head and body of both sexes with higher expression in testis than ovary. In the ovary, expressed in both germ and follicle cells. In adult head, predominantly neuronal with broad expression throughout the brain and ventral ganglia including the mushroom body.

The protein localises to the perikaryon. It localises to the cell projection. It is found in the axon. Its subcellular location is the dendrite. The protein resides in the synapse. The protein localises to the cytoplasm. It localises to the perinuclear region. In terms of biological role, RNA-binding protein involved in translational regulation and required for long-term memory. Required in mushroom body gamma neurons for long-term memory in male courtship. Binds to mRNA 3'-UTRs. In its monomeric form, acts as a translational repressor of genes involved in neuronal growth, synapse formation and protein turnover. In its amyloid-like oligomeric form, acts as a translational activator. The monomeric form reduces poly(A) tail length and destabilizes mRNA while the oligomeric form protects and elongates the poly(A) tail and stabilizes mRNA. Involved in asymmetric cell division in the central nervous system. Plays a role in synapse formation and morphology at neuromuscular junctions by modulating the translation of the tumor suppressor brat. Required for the progression of spermatogenesis through meiosis and for sperm differentiation. During sperm differentiation, required to asymmetrically localize and activate the translation of protein kinase aPKC mRNAs which is necessary for spermatid cyst polarization. Also required during spermatid cyst polarization for localization and translation of its own mRNA. Its function is as follows. Required for initial memory acquisition. Following subsequent late dopaminergic pathway activation, recruits isoform B into a complex to activate translation of CaMKII which is required for long-term memory consolidation. This is Translational regulator orb2 from Drosophila melanogaster (Fruit fly).